We begin with the raw amino-acid sequence, 608 residues long: Albumin (608 aa).

Residues 1 to 18 form the signal peptide; that stretch reads MKWVTFISLLLLFSSAYS. The propeptide occupies 19–24; sequence RGVTRR. Albumin domains follow at residues 19 to 210, 211 to 403, and 404 to 601; these read RGVT…DALR, EKVL…EFKP, and LVEE…KLVA. His-27 provides a ligand contact to Cu cation. Ser-29 carries the post-translational modification Phosphoserine. Residues Glu-30 and Asp-37 each coordinate Ca(2+). A disulfide bridge links Cys-77 with Cys-86. Phosphoserine is present on residues Ser-82 and Ser-89. His-91 contacts Zn(2+). 6 disulfide bridges follow: Cys-99/Cys-115, Cys-114/Cys-125, Cys-148/Cys-193, Cys-192/Cys-201, Cys-224/Cys-270, and Cys-269/Cys-277. N6-succinyllysine is present on Lys-229. Glu-268 provides a ligand contact to Ca(2+). 2 residues coordinate Zn(2+): His-271 and Asp-273. Residues Asp-273, Glu-276, Asp-279, and Asp-283 each contribute to the Ca(2+) site. Cystine bridges form between Cys-289–Cys-303, Cys-302–Cys-313, Cys-340–Cys-385, Cys-384–Cys-393, Cys-416–Cys-462, Cys-461–Cys-472, Cys-485–Cys-501, and Cys-500–Cys-511. Phosphoserine is present on Ser-443. Phosphothreonine is present on residues Thr-444 and Thr-446. Residue Lys-460 is modified to N6-succinyllysine. Ser-513 carries the post-translational modification Phosphoserine. Intrachain disulfides connect Cys-538–Cys-583 and Cys-582–Cys-591. Residue Lys-558 is modified to N6-methyllysine. Thr-570 carries the phosphothreonine modification. N6-succinyllysine is present on Lys-588.

The protein belongs to the ALB/AFP/VDB family. As to quaternary structure, interacts with FCGRT; this interaction regulates ALB homeostasis. Interacts with TASOR. In plasma, occurs in a covalently-linked complex with chromophore-bound alpha-1-microglobulin; this interaction does not prevent fatty acid binding to ALB. Post-translationally, phosphorylated by FAM20C in the extracellular medium. In terms of tissue distribution, plasma.

It localises to the secreted. Binds water, Ca(2+), Na(+), K(+), fatty acids, hormones, bilirubin and drugs. Its main function is the regulation of the colloidal osmotic pressure of blood. Major zinc transporter in plasma, typically binds about 80% of all plasma zinc. Major calcium and magnesium transporter in plasma, binds approximately 45% of circulating calcium and magnesium in plasma. Potentially has more than two calcium-binding sites and might additionally bind calcium in a non-specific manner. The shared binding site between zinc and calcium at residue Asp-273 suggests a crosstalk between zinc and calcium transport in the blood. The rank order of affinity is zinc &gt; calcium &gt; magnesium. Binds to the bacterial siderophore enterobactin and inhibits enterobactin-mediated iron uptake of E.coli from ferric transferrin, and may thereby limit the utilization of iron and growth of enteric bacteria such as E.coli. Does not prevent iron uptake by the bacterial siderophore aerobactin. The polypeptide is Albumin (ALB) (Felis catus (Cat)).